Reading from the N-terminus, the 553-residue chain is Urocanate hydratase (553 aa).

Residues 45-46 (GG), Gln123, 169-171 (GMG), Asp189, Arg194, 235-236 (NA), 256-260 (QTSAH), 266-267 (YV), Tyr315, and Gly485 contribute to the NAD(+) site.

This sequence belongs to the urocanase family. NAD(+) is required as a cofactor.

It is found in the cytoplasm. The enzyme catalyses 4-imidazolone-5-propanoate = trans-urocanate + H2O. Its pathway is amino-acid degradation; L-histidine degradation into L-glutamate; N-formimidoyl-L-glutamate from L-histidine: step 2/3. Its function is as follows. Catalyzes the conversion of urocanate to 4-imidazolone-5-propionate. The protein is Urocanate hydratase of Staphylococcus saprophyticus subsp. saprophyticus (strain ATCC 15305 / DSM 20229 / NCIMB 8711 / NCTC 7292 / S-41).